Here is a 430-residue protein sequence, read N- to C-terminus: Phosphomethylpyrimidine synthase (430 aa).

Substrate contacts are provided by residues Asn-67, Met-96, Tyr-125, His-161, 183–185 (SRG), 224–227 (DALR), and Glu-263. His-267 serves as a coordination point for Zn(2+). Tyr-290 lines the substrate pocket. A Zn(2+)-binding site is contributed by His-331. [4Fe-4S] cluster contacts are provided by Cys-406, Cys-409, and Cys-413.

It belongs to the ThiC family. In terms of assembly, homodimer. It depends on [4Fe-4S] cluster as a cofactor.

The enzyme catalyses 5-amino-1-(5-phospho-beta-D-ribosyl)imidazole + S-adenosyl-L-methionine = 4-amino-2-methyl-5-(phosphooxymethyl)pyrimidine + CO + 5'-deoxyadenosine + formate + L-methionine + 3 H(+). The protein operates within cofactor biosynthesis; thiamine diphosphate biosynthesis. In terms of biological role, catalyzes the synthesis of the hydroxymethylpyrimidine phosphate (HMP-P) moiety of thiamine from aminoimidazole ribotide (AIR) in a radical S-adenosyl-L-methionine (SAM)-dependent reaction. This is Phosphomethylpyrimidine synthase from Campylobacter jejuni (strain RM1221).